A 106-amino-acid polypeptide reads, in one-letter code: L-rhamnose mutarotase (106 aa).

A substrate-binding site is contributed by Y20. H24 (proton donor) is an active-site residue. Substrate-binding positions include Y43 and 78–79; that span reads WW.

Belongs to the rhamnose mutarotase family. As to quaternary structure, homodimer.

It is found in the cytoplasm. It catalyses the reaction alpha-L-rhamnose = beta-L-rhamnose. The protein operates within carbohydrate metabolism; L-rhamnose metabolism. Involved in the anomeric conversion of L-rhamnose. This chain is L-rhamnose mutarotase, found in Rhizobium etli (strain ATCC 51251 / DSM 11541 / JCM 21823 / NBRC 15573 / CFN 42).